The following is a 73-amino-acid chain: uncharacterized protein (73 aa).

This is an uncharacterized protein from Invertebrate iridescent virus 6 (IIV-6).